We begin with the raw amino-acid sequence, 308 residues long: Carbonic anhydrase 4 (308 aa).

The N-terminal stretch at Met1 to Gly18 is a signal peptide. An Alpha-carbonic anhydrase domain is found at Leu21–Gln281. 2 cysteine pairs are disulfide-bonded: Cys24/Cys34 and Cys44/Cys225. Asn31 is a glycosylation site (N-linked (GlcNAc...) asparagine). His86 (proton donor/acceptor) is an active-site residue. Residues His113, His115, and His138 each coordinate Zn(2+). The N-linked (GlcNAc...) asparagine glycan is linked to Asn192. Thr221 to Thr222 serves as a coordination point for substrate. The GPI-anchor amidated serine moiety is linked to residue Ser280. Residues Gln281–Arg308 constitute a propeptide, removed in mature form.

This sequence belongs to the alpha-carbonic anhydrase family. As to quaternary structure, interacts with SLC4A4. Requires Zn(2+) as cofactor.

It is found in the cell membrane. The catalysed reaction is hydrogencarbonate + H(+) = CO2 + H2O. Its activity is regulated as follows. Inhibited by acetazolamide. Functionally, catalyzes the reversible hydration of carbon dioxide into bicarbonate and protons and thus is essential to maintaining intracellular and extracellular pH. May stimulate the sodium/bicarbonate transporter activity of SLC4A4 that acts in pH homeostasis. It is essential for acid overload removal from the retina and retina epithelium, and acid release in the choriocapillaris in the choroid. The chain is Carbonic anhydrase 4 (CA4) from Oryctolagus cuniculus (Rabbit).